A 921-amino-acid chain; its full sequence is Probable dipeptidyl-aminopeptidase B (921 aa).

Disordered regions lie at residues 1–33 and 45–66; these read MAGHPEENAQLLSTEQESMSRNSSDSVASTAST and VAANGSEKPTMVTPKFPPRGER. At 1 to 109 the chain is on the cytoplasmic side; the sequence is MAGHPEENAQ…NKSVDKKLRR (109 aa). A compositionally biased stretch (polar residues) spans 10–22; it reads QLLSTEQESMSRN. Low complexity predominate over residues 23–33; sequence SSDSVASTAST. A helical; Signal-anchor for type II membrane protein membrane pass occupies residues 110-130; the sequence is LIWIIGGVFIGAWVLALFIFL. At 131–921 the chain is on the vacuolar side; it reads GKQAYKHSSE…VPLEIDAAKV (791 aa). The disordered stretch occupies residues 138–157; the sequence is SSESPHDPQATSSRGSGKKV. An N-linked (GlcNAc...) asparagine glycan is attached at N362. S768 acts as the Charge relay system in catalysis. N-linked (GlcNAc...) asparagine glycosylation is present at N822. Residues D845 and H878 each act as charge relay system in the active site.

Belongs to the peptidase S9B family.

Its subcellular location is the vacuole membrane. The enzyme catalyses Release of an N-terminal dipeptide, Xaa-Yaa-|-Zaa-, from a polypeptide, preferentially when Yaa is Pro, provided Zaa is neither Pro nor hydroxyproline.. Functionally, type IV dipeptidyl-peptidase which removes N-terminal dipeptides sequentially from polypeptides having unsubstituted N-termini provided that the penultimate residue is proline. The polypeptide is Probable dipeptidyl-aminopeptidase B (dapB) (Botryotinia fuckeliana (strain B05.10) (Noble rot fungus)).